The primary structure comprises 132 residues: L-ectoine synthase (132 aa).

This sequence belongs to the ectoine synthase family.

It carries out the reaction (2S)-4-acetamido-2-aminobutanoate = L-ectoine + H2O. The protein operates within amine and polyamine biosynthesis; ectoine biosynthesis; L-ectoine from L-aspartate 4-semialdehyde: step 3/3. Catalyzes the circularization of gamma-N-acetyl-alpha,gamma-diaminobutyric acid (ADABA) to ectoine (1,4,5,6-tetrahydro-2-methyl-4-pyrimidine carboxylic acid), which is an excellent osmoprotectant. The sequence is that of L-ectoine synthase from Rhodococcus opacus (strain B4).